The chain runs to 431 residues: Asparagine--tRNA ligase 1 (431 aa).

Belongs to the class-II aminoacyl-tRNA synthetase family. Homodimer.

It is found in the cytoplasm. It catalyses the reaction tRNA(Asn) + L-asparagine + ATP = L-asparaginyl-tRNA(Asn) + AMP + diphosphate + H(+). In Lactiplantibacillus plantarum (strain ATCC BAA-793 / NCIMB 8826 / WCFS1) (Lactobacillus plantarum), this protein is Asparagine--tRNA ligase 1 (asnS1).